Reading from the N-terminus, the 281-residue chain is NADH--cytochrome b5 reductase 1 (281 aa).

A helical membrane pass occupies residues 13 to 33 (ILLGVFVAFVAVGAGAAYFLT). An AKR2A-binding sequence (ABS) required for mitochondrion outer membrane targeting motif is present at residues 34 to 40 (SSKKRRV). The FAD-binding FR-type domain maps to 45–149 (ENFKEFKLVK…KGPKGRFKYQ (105 aa)). Residues 129-144 (REMRVGDHLAVKGPKG) and 155-187 (AFGMLAGGSGITPMFQVARAILENPTDKTKVHL) contribute to the FAD site. Residue Thr166 is modified to Phosphothreonine.

The protein belongs to the flavoprotein pyridine nucleotide cytochrome reductase family. In terms of assembly, monomer. Interacts with AKR2A. The cofactor is FAD. In terms of tissue distribution, expressed in roots, stems, flowers and siliques. Detected in leaves.

The protein localises to the mitochondrion outer membrane. It carries out the reaction 2 Fe(III)-[cytochrome b5] + NADH = 2 Fe(II)-[cytochrome b5] + NAD(+) + H(+). Reductase transferring electrons from NADH to cytochrome b5. Required for the NADH-dependent electron transfer involved in the desaturation and hydroxylation of fatty acids and in the desaturation of sterol precursors. No activity with NADPH as electron donor. This Arabidopsis thaliana (Mouse-ear cress) protein is NADH--cytochrome b5 reductase 1.